Consider the following 116-residue polypeptide: U11-theraphotoxin-Hhn1b (116 aa).

The signal sequence occupies residues 1 to 21 (MNTVRVAFLLVFVLAVSLGQA). Residues 22–74 (DKDENRMEMQEKTEQGKSYLDFAENLLLQKLEELEAKLLEEDSEESRNSRQKR) constitute a propeptide that is removed on maturation. The tract at residues 61-83 (EEDSEESRNSRQKRCIGEGVPCD) is disordered. Cystine bridges form between Cys-75/Cys-90, Cys-82/Cys-95, and Cys-89/Cys-110.

Belongs to the neurotoxin 14 (magi-1) family. 01 (HNTX-16) subfamily. Expressed by the venom gland.

The protein resides in the secreted. In terms of biological role, probable ion channel inhibitor. The polypeptide is U11-theraphotoxin-Hhn1b (Cyriopagopus hainanus (Chinese bird spider)).